Here is a 564-residue protein sequence, read N- to C-terminus: NAD-dependent malic enzyme (564 aa).

Tyrosine 104 functions as the Proton donor in the catalytic mechanism. Residue arginine 157 participates in NAD(+) binding. The Proton acceptor role is filled by lysine 175. A divalent metal cation-binding residues include glutamate 246, aspartate 247, and aspartate 270. 2 residues coordinate NAD(+): aspartate 270 and asparagine 417.

This sequence belongs to the malic enzymes family. Homotetramer. Mg(2+) is required as a cofactor. Requires Mn(2+) as cofactor.

It catalyses the reaction (S)-malate + NAD(+) = pyruvate + CO2 + NADH. The catalysed reaction is oxaloacetate + H(+) = pyruvate + CO2. This chain is NAD-dependent malic enzyme, found in Aeromonas salmonicida (strain A449).